Reading from the N-terminus, the 282-residue chain is Probable metal transport system membrane protein TM_0125 (282 aa).

9 helical membrane passes run 33–53 (AFVGGILVASLSGLVSPIVVF), 58–78 (FIGDGTAHAVFAGLAAATLIG), 79–99 (ADHRLIAFATALLFAFAVSLF), 109–129 (AIGILLPFFMAVGVVLFSVSG), 148–168 (STDVAITAVVLALSVILTVVF), 184–204 (FYGIKTDLIRFLITSFIAITV), 210–230 (VVGVILTGALLILPGLVSKIF), 234–254 (FWSLTTISVIFSTGVFFAGFL), and 259–279 (LDLPPGPVIVIIAFVSFLPML).

This sequence belongs to the ABC-3 integral membrane protein family.

Its subcellular location is the cell inner membrane. Functionally, part of an ATP-driven transport system TM_0123/TM_0124/TM_0125 for a metal. This is Probable metal transport system membrane protein TM_0125 from Thermotoga maritima (strain ATCC 43589 / DSM 3109 / JCM 10099 / NBRC 100826 / MSB8).